The chain runs to 225 residues: Leucyl/phenylalanyl-tRNA--protein transferase (225 aa).

Belongs to the L/F-transferase family.

The protein localises to the cytoplasm. The catalysed reaction is N-terminal L-lysyl-[protein] + L-leucyl-tRNA(Leu) = N-terminal L-leucyl-L-lysyl-[protein] + tRNA(Leu) + H(+). The enzyme catalyses N-terminal L-arginyl-[protein] + L-leucyl-tRNA(Leu) = N-terminal L-leucyl-L-arginyl-[protein] + tRNA(Leu) + H(+). It carries out the reaction L-phenylalanyl-tRNA(Phe) + an N-terminal L-alpha-aminoacyl-[protein] = an N-terminal L-phenylalanyl-L-alpha-aminoacyl-[protein] + tRNA(Phe). Functions in the N-end rule pathway of protein degradation where it conjugates Leu, Phe and, less efficiently, Met from aminoacyl-tRNAs to the N-termini of proteins containing an N-terminal arginine or lysine. This chain is Leucyl/phenylalanyl-tRNA--protein transferase, found in Nitrobacter winogradskyi (strain ATCC 25391 / DSM 10237 / CIP 104748 / NCIMB 11846 / Nb-255).